Here is a 135-residue protein sequence, read N- to C-terminus: ATP synthase epsilon chain (135 aa).

It belongs to the ATPase epsilon chain family. In terms of assembly, F-type ATPases have 2 components, CF(1) - the catalytic core - and CF(0) - the membrane proton channel. CF(1) has five subunits: alpha(3), beta(3), gamma(1), delta(1), epsilon(1). CF(0) has three main subunits: a, b and c.

It localises to the cell inner membrane. Its function is as follows. Produces ATP from ADP in the presence of a proton gradient across the membrane. The polypeptide is ATP synthase epsilon chain (Granulibacter bethesdensis (strain ATCC BAA-1260 / CGDNIH1)).